The primary structure comprises 1706 residues: Bifunctional hemolysin/adenylate cyclase (1706 aa).

The segment at 1–399 (MQQSHQAGYA…RRPSLGAVER (399 aa)) is a, catalytic. 349–356 (AYGVAGKS) is a binding site for ATP. The segment at 383–405 (VPASPGLRRPSLGAVERQDSGYD) is disordered. The b, Ala/Gly-rich stretch occupies residues 400–912 (QDSGYDSLDG…LKHSIKLDVI (513 aa)). Residues 500-698 (LSAAVFGLGE…SVVGAPVAVV (199 aa)) form a required for interaction with CyaC region. 2 N6-palmitoyl lysine lipidation sites follow: lysine 860 and lysine 983. The c stretch occupies residues 913–1656 (GGDGDDVVLA…RDADHRVEII (744 aa)). Hemolysin-type calcium-binding repeat units lie at residues 1014–1031 (IGGA…DNFL), 1032–1049 (AGGS…NDTL), 1050–1067 (VGGE…DDVF), 1155–1172 (WGHD…DDIL), 1173–1190 (RGGL…NDIF), 1279–1296 (MGQG…DDLL), 1297–1314 (FGGD…NDTL), 1315–1332 (YGGL…NDWF), 1335–1352 (TQAR…VDTV), 1411–1428 (TGDA…ADVL), 1429–1446 (AGGE…DDQL), 1447–1464 (SGDA…DDWF), 1468–1484 (AANA…RDTV), 1537–1554 (IGDA…NDVL), 1555–1572 (SGGA…SDLL), 1573–1590 (SGDA…DDTY), and 1603–1620 (ESGG…ADQL). The d, Asp/Gly-rich stretch occupies residues 1657–1706 (HAANQAVDQAGIEKLVEAMAQYPDPGAAAAAPPAARVPDTLMQSLAVNWR).

The protein in the N-terminal section; belongs to the adenylyl cyclase class-2 family. It in the C-terminal section; belongs to the RTX prokaryotic toxin family. Post-translationally, released in a processed form. Palmitoylated at Lys-860 and Lys-983 by CyaC. The toxin only becomes active when modified in position Lys-983: palmitoylation is required for efficient membrane insertion and pore formation of the acylated Hemolysin chain.

Its subcellular location is the secreted. It is found in the host cell membrane. The enzyme catalyses ATP = 3',5'-cyclic AMP + diphosphate. With respect to regulation, activated by host calmodulin. Bifunctional adenylate cyclase toxin-hemolysin that plays a crucial role in host colonization. It causes whooping cough by acting on mammalian cells by elevating cAMP-concentration and thus disrupts normal cell function. Functionally, adenylate cyclase that is activated by host intracellular calmodulin and catalyzes un-regulated conversion of ATP to cAMP, thereby impairing microbicidal functions of immune effector cells and inducing apoptosis of lung macrophages. In terms of biological role, hemolysin that forms small cation-selective membrane channels, leading to hemolytic activity. The hemolytic activity of CyaA is weak compared with that of the HlyA of E.coli. The sequence is that of Bifunctional hemolysin/adenylate cyclase (cya) from Bordetella pertussis (strain Tohama I / ATCC BAA-589 / NCTC 13251).